A 313-amino-acid chain; its full sequence is Cytosolic Fe-S cluster assembly factor NUBP1 homolog (313 aa).

The interval 1–25 (MSDVPEDANAGCPGTGSAGAGKASG) is disordered. [4Fe-4S] cluster is bound by residues Cys-12, Cys-26, Cys-29, and Cys-35. 66-73 (GKGGVGKS) serves as a coordination point for ATP. Residues Cys-240 and Cys-243 each coordinate [4Fe-4S] cluster.

This sequence belongs to the Mrp/NBP35 ATP-binding proteins family. NUBP1/NBP35 subfamily. Heterotetramer of 2 NUBP1 and 2 NUBP2 chains. [4Fe-4S] cluster serves as cofactor.

The protein resides in the cytoplasm. The protein localises to the cell projection. Its function is as follows. Component of the cytosolic iron-sulfur (Fe/S) protein assembly (CIA) machinery. Required for maturation of extramitochondrial Fe-S proteins. The NUBP1-NUBP2 heterotetramer forms a Fe-S scaffold complex, mediating the de novo assembly of an Fe-S cluster and its transfer to target apoproteins. Regulates cilium formation and structure. The chain is Cytosolic Fe-S cluster assembly factor NUBP1 homolog from Caenorhabditis briggsae.